Here is a 299-residue protein sequence, read N- to C-terminus: Oxygen-dependent coproporphyrinogen-III oxidase (299 aa).

A substrate-binding site is contributed by serine 92. A divalent metal cation contacts are provided by histidine 96 and histidine 106. The active-site Proton donor is histidine 106. 108 to 110 contributes to the substrate binding site; that stretch reads NVR. Residues histidine 145 and histidine 175 each coordinate a divalent metal cation. Residues 239–274 form an important for dimerization region; the sequence is YVEFNLVYDRGTLFGLQSGGRAESILMSLPPRVRWE. 257 to 259 provides a ligand contact to substrate; that stretch reads GGR.

The protein belongs to the aerobic coproporphyrinogen-III oxidase family. Homodimer. The cofactor is a divalent metal cation.

The protein resides in the cytoplasm. It catalyses the reaction coproporphyrinogen III + O2 + 2 H(+) = protoporphyrinogen IX + 2 CO2 + 2 H2O. The protein operates within porphyrin-containing compound metabolism; protoporphyrin-IX biosynthesis; protoporphyrinogen-IX from coproporphyrinogen-III (O2 route): step 1/1. In terms of biological role, involved in the heme biosynthesis. Catalyzes the aerobic oxidative decarboxylation of propionate groups of rings A and B of coproporphyrinogen-III to yield the vinyl groups in protoporphyrinogen-IX. The polypeptide is Oxygen-dependent coproporphyrinogen-III oxidase (Xanthomonas oryzae pv. oryzae (strain MAFF 311018)).